The primary structure comprises 409 residues: MVRYVPRFADGQKVKLAWPLAVFRLNHIFWPLDPSTGKWGRYLDKVLAVAMSLVFMQHNDAELRYLRFEASNRNLDAFLTGMPTYLILVEAQFRSLHILLHFEKLQKFLEIFYANIYIDPRKEPEMFRKVDGKMIINRLVSAMYGAVISLYLIAPVFSIINQSKDFLYSMIFPFDSDPLYIFVPLLLTNVWVGIVIDTMMFGETNLLCELIVHLNGSYMLLKRDLQLAIEKILVARDRPHMAKQLKVLITKTLRKNVALNQFGQQLEAQYTVRVFIMFAFAAGLLCALSFKAYTNPMANYIYAIWFGAKTVELLSLGQIGSDLAFTTDSLSTMYYLTHWEQILQYSTNPSENLRLLKLINLAIEMNSKPFYVTGLKYFRVSLQAGLKILQASFSYFTFLTSMQRRQMSN.

Over 1–35 (MVRYVPRFADGQKVKLAWPLAVFRLNHIFWPLDPS) the chain is Cytoplasmic. A helical transmembrane segment spans residues 36–56 (TGKWGRYLDKVLAVAMSLVFM). The Extracellular segment spans residues 57-64 (QHNDAELR). The helical transmembrane segment at 65–85 (YLRFEASNRNLDAFLTGMPTY) threads the bilayer. Residues 86-139 (LILVEAQFRSLHILLHFEKLQKFLEIFYANIYIDPRKEPEMFRKVDGKMIINRL) lie on the Cytoplasmic side of the membrane. A helical membrane pass occupies residues 140–160 (VSAMYGAVISLYLIAPVFSII). The N-linked (GlcNAc...) asparagine glycan is linked to asparagine 161. The Extracellular segment spans residues 161–177 (NQSKDFLYSMIFPFDSD). The chain crosses the membrane as a helical span at residues 178–198 (PLYIFVPLLLTNVWVGIVIDT). Residues 199–273 (MMFGETNLLC…QQLEAQYTVR (75 aa)) lie on the Cytoplasmic side of the membrane. Residues 274–294 (VFIMFAFAAGLLCALSFKAYT) form a helical membrane-spanning segment. At 295 to 302 (NPMANYIY) the chain is on the extracellular side. Residues 303–323 (AIWFGAKTVELLSLGQIGSDL) traverse the membrane as a helical segment. At 324 to 379 (AFTTDSLSTMYYLTHWEQILQYSTNPSENLRLLKLINLAIEMNSKPFYVTGLKYFR) the chain is on the cytoplasmic side. Residues 380–400 (VSLQAGLKILQASFSYFTFLT) form a helical membrane-spanning segment. The Extracellular portion of the chain corresponds to 401–409 (SMQRRQMSN).

Belongs to the insect chemoreceptor superfamily. Heteromeric odorant receptor channel (TC 1.A.69) family. Or1a subfamily. In terms of assembly, interacts with Orco. Complexes exist early in the endomembrane system in olfactory sensory neurons (OSNs), coupling these complexes to the conserved ciliary trafficking pathway. As to expression, expressed in ac3B olfactory sensory neurons in the antenna.

Its subcellular location is the cell membrane. Functionally, odorant receptor which mediates acceptance or avoidance behavior, depending on its substrates. The odorant receptor repertoire encodes a large collection of odor stimuli that vary widely in identity, intensity, and duration. Forms a complex with Orco to form odorant-sensing units, providing sensitive and prolonged odorant signaling and calcium permeability. Involved in the behavioral responses to esters. Involved in the behavioral responses to butanol, pentanol, hexanol, octanol, propyl acetate, and butyl acetate. The polypeptide is Odorant receptor 35a (Or35a) (Drosophila melanogaster (Fruit fly)).